The following is a 348-amino-acid chain: Anthranilate phosphoribosyltransferase (348 aa).

5-phospho-alpha-D-ribose 1-diphosphate contacts are provided by residues glycine 81, 84–85 (GD), 91–94 (NVST), 109–117 (KHGNRAVSG), and serine 121. Glycine 81 serves as a coordination point for anthranilate. Serine 93 is a Mg(2+) binding site. Asparagine 112 is an anthranilate binding site. Arginine 167 contributes to the anthranilate binding site. Aspartate 226 and glutamate 227 together coordinate Mg(2+).

The protein belongs to the anthranilate phosphoribosyltransferase family. Homodimer. The cofactor is Mg(2+).

It carries out the reaction N-(5-phospho-beta-D-ribosyl)anthranilate + diphosphate = 5-phospho-alpha-D-ribose 1-diphosphate + anthranilate. It participates in amino-acid biosynthesis; L-tryptophan biosynthesis; L-tryptophan from chorismate: step 2/5. Functionally, catalyzes the transfer of the phosphoribosyl group of 5-phosphorylribose-1-pyrophosphate (PRPP) to anthranilate to yield N-(5'-phosphoribosyl)-anthranilate (PRA). This Ectopseudomonas mendocina (strain ymp) (Pseudomonas mendocina) protein is Anthranilate phosphoribosyltransferase.